We begin with the raw amino-acid sequence, 118 residues long: Altered inheritance of mitochondria protein 26, mitochondrial (118 aa).

Transmembrane regions (helical) follow at residues 7–27 (EHLL…AYFF), 41–61 (LAVT…SIPA), and 98–118 (FLFC…GLSI).

The protein resides in the mitochondrion membrane. Its function is as follows. Involved in selective mitochondria autophagy (mitophagy). This is Altered inheritance of mitochondria protein 26, mitochondrial (AIM26) from Saccharomyces cerevisiae (strain ATCC 204508 / S288c) (Baker's yeast).